Here is a 921-residue protein sequence, read N- to C-terminus: Phototropin-1A (921 aa).

Positions 1 to 11 (MASKGTEGGHG) are enriched in gly residues. Disordered stretches follow at residues 1–59 (MASK…SPFL) and 88–118 (TGLP…QSAA). Low complexity predominate over residues 40-51 (SSASSFRTAAAA). Over residues 97 to 117 (RPSSGSARTSSEDNPQQQQSA) the composition is skewed to polar residues. The 75-residue stretch at 123-197 (VSEELRAALS…KIRQSLANGS (75 aa)) folds into the PAS 1 domain. FMN is bound by residues 172 to 177 (NCRFLQ), arginine 190, asparagine 205, asparagine 215, and glutamine 236. S-4a-FMN cysteine is present on cysteine 173. Residues 197 to 251 (SNYCGRILNYKKDGTPFWNLLTIAPIKDEDGRLLKFIGMQVEVSKYTEGKKDTVV) enclose the PAC 1 domain. Residues 286-295 (RSLSESSNNT) show a composition bias toward polar residues. Disordered regions lie at residues 286–347 (RSLS…NRTR) and 364–390 (SVEK…ESFE). Basic and acidic residues-rich tracts occupy residues 312-321 (PSKRSSESGS) and 364-376 (SVEK…RDED). Residues 400 to 473 (RGIDLATTLE…RKIRDAIDNQ (74 aa)) form the PAS 2 domain. FMN is bound by residues 449 to 454 (NCRFLQ), arginine 467, asparagine 482, asparagine 492, and glutamine 513. At cysteine 450 the chain carries S-4a-FMN cysteine. One can recognise a PAC 2 domain in the interval 474–528 (AEVTVQLINYTKSGKKFWNLFHLQPMRDQKGDVQYFIGVQLDGTEHVQDDAAKEG). Residues 594–881 (FRPVKPLGSG…ANEIKGHPFF (288 aa)) enclose the Protein kinase domain. Residues 600–608 (LGSGDTGSV) and lysine 623 contribute to the ATP site. Aspartate 719 acts as the Proton acceptor in catalysis.

The protein belongs to the protein kinase superfamily. Ser/Thr protein kinase family. Homodimer. FMN serves as cofactor. In terms of processing, autophosphorylated in response to blue light irradiation. Post-translationally, 2 molecules of FMN bind covalently to cysteines after exposure to blue light and are reversed in the dark. In terms of tissue distribution, highly expressed in coleoptiles of dark-grown seedlings.

It carries out the reaction L-seryl-[protein] + ATP = O-phospho-L-seryl-[protein] + ADP + H(+). The catalysed reaction is L-threonyl-[protein] + ATP = O-phospho-L-threonyl-[protein] + ADP + H(+). Functionally, protein kinase that acts as a blue light photoreceptor in a signal-transduction pathway for phototropic responses. Regulates a wide range of physiological activities in plants that maximize the efficiency of photosynthesis, such as chloroplast relocations, stomata opening, and leaf expansion. This Oryza sativa subsp. japonica (Rice) protein is Phototropin-1A (PHOT1A).